Reading from the N-terminus, the 216-residue chain is Putative transmembrane protein RNF32-DT (216 aa).

The helical transmembrane segment at 177–197 threads the bilayer; sequence WIPLLLVAGCVSCFVGLAVCV.

In terms of tissue distribution, expressed only in testis.

It is found in the cytoplasm. The protein resides in the membrane. The sequence is that of Putative transmembrane protein RNF32-DT from Homo sapiens (Human).